A 153-amino-acid polypeptide reads, in one-letter code: Fucose mutarotase (153 aa).

The active-site Proton donor is H24. D32 is a binding site for substrate. Residue D69 is part of the active site. Substrate is bound by residues M79, Y119, Y137, and N139. Y119 is an active-site residue.

This sequence belongs to the RbsD / FucU family. In terms of assembly, mainly homodimer, but also exists as homotetramer, homooctamer, and homodecamer. The homodimeric form seems catalytically inactive.

It catalyses the reaction alpha-L-fucose = beta-L-fucose. Its pathway is carbohydrate metabolism; L-fucose metabolism. In terms of biological role, involved in the interconversion between alpha- and beta-L-fucoses. L-Fucose (6-deoxy-L-galactose) exists as alpha-L-fucose (29.5%) and beta-L-fucose (70.5%), the beta-form is metabolized through the salvage pathway. GDP-L-fucose formed either by the de novo or salvage pathways is transported into the endoplasmic reticulum, where it serves as a substrate for N- and O-glycosylations by fucosyltransferases. Fucosylated structures expressed on cell surfaces or secreted in biological fluids are believed to play a critical role in cell-cell adhesion and recognition processes. This is Fucose mutarotase (FUOM) from Bos taurus (Bovine).